A 195-amino-acid polypeptide reads, in one-letter code: Glycerol-3-phosphate acyltransferase (195 aa).

A run of 5 helical transmembrane segments spans residues 7–27 (IFIL…SYVI), 52–72 (LALL…AIAQ), 80–100 (ILFL…YLFF), 113–133 (LIFI…ICFL), and 147–167 (LIAL…IFTI).

This sequence belongs to the PlsY family. Probably interacts with PlsX.

Its subcellular location is the cell inner membrane. The enzyme catalyses an acyl phosphate + sn-glycerol 3-phosphate = a 1-acyl-sn-glycero-3-phosphate + phosphate. Its pathway is lipid metabolism; phospholipid metabolism. Its function is as follows. Catalyzes the transfer of an acyl group from acyl-phosphate (acyl-PO(4)) to glycerol-3-phosphate (G3P) to form lysophosphatidic acid (LPA). This enzyme utilizes acyl-phosphate as fatty acyl donor, but not acyl-CoA or acyl-ACP. In Ehrlichia ruminantium (strain Welgevonden), this protein is Glycerol-3-phosphate acyltransferase.